A 615-amino-acid chain; its full sequence is MKWVTLISFIFLFSSATSRNLQRFARDAEHKSEIAHRYNDLKEETFKAVAMITFAQYLQRCSYEGLSKLVKDVVDLAQKCVANEDAPECSKPLPSIILDEICQVEKLRDSYGAMADCCSKADPERNECFLSFKVSQPDFVQPYQRPASDVICQEYQDNRVSFLGHFIYSVARRHPFLYAPAILSFAVDFEHALQSCCKESDVGACLDTKEIVMREKAKGVSVKQQYFCGILKQFGDRVFQARQLIYLSQKYPKAPFSEVSKFVHDSIGVHKECCEGDMVECMDDMARMMSNLCSQQDVFSGKIKDCCEKPIVERSQCIMEAEFDEKPADLPSLVEKYIEDKEVCKSFEAGHDAFMAEFVYEYSRRHPEFSIQLIMRIAKGYESLLEKCCKTDNPAECYANAQEQLNQHIKETQDVVKTNCDLLHDHGEADFLKSILIRYTKKMPQVPTDLLLETGKKMTTIGTKCCQLGEDRRMACSEGYLSIVIHDTCRKQETTPINDNVSQCCSQLYANRRPCFTAMGVDTKYVPPPFNPDMFSFDEKLCSAPAEEREVGQMKLLINLIKRKPQMTEEQIKTIADGFTAMVDKCCKQSDINTCFGEEGANLIVQSRATLGIGA.

The signal sequence occupies residues 1–18; it reads MKWVTLISFIFLFSSATS. A propeptide spanning residues 19–23 is cleaved from the precursor; it reads RNLQR. 3 consecutive Albumin domains span residues 22–214, 215–407, and 408–605; these read QRFA…IVMR, EKAK…QLNQ, and HIKE…NLIV. H30 is a Cu cation binding site. The Ca(2+) site is built by E33 and D40. 7 cysteine pairs are disulfide-bonded: C80–C89, C102–C118, C117–C128, C152–C197, C196–C205, C228–C274, and C273–C281. Ca(2+) is bound by residues E272, D277, E280, and D283. D277 lines the Zn(2+) pocket. Disulfide bonds link C293/C307, C306/C317, C344/C389, C388/C397, C420/C466, C465/C476, C489/C505, C504/C515, C542/C587, and C586/C595. The N-linked (GlcNAc...) asparagine glycan is linked to N500.

Belongs to the ALB/AFP/VDB family. In terms of tissue distribution, plasma.

It localises to the secreted. Binds water, Ca(2+), Na(+), K(+), fatty acids, hormones, bilirubin and drugs. Its main function is the regulation of the colloidal osmotic pressure of blood. The chain is Albumin (ALB) from Gallus gallus (Chicken).